The following is a 240-amino-acid chain: Thyroid transcription factor 1-associated protein 26 (240 aa).

The segment at 104 to 181 (LRKQQRKAGL…QEEYERVQAK (78 aa)) is disordered. Positions 131–149 (TEQTSSEEPPGGHQPQPEE) are enriched in low complexity. The segment covering 171–181 (AQEEYERVQAK) has biased composition (basic and acidic residues).

The protein belongs to the TAP26 family. In terms of assembly, interacts with NKX2-1.

It localises to the nucleus. Its function is as follows. Component of the transcription complexes of the pulmonary surfactant-associated protein-B (SFTPB) and -C (SFTPC). Enhances homeobox protein Nkx-2.1-activated SFTPB and SFTPC promoter activities. This is Thyroid transcription factor 1-associated protein 26 (Ccdc59) from Mus musculus (Mouse).